Reading from the N-terminus, the 646-residue chain is MADDSGTEDVGSGCSGWFLVEAVVDKQTGDVVSEDEDEDAIEDSGYDMVDFINDTVVSEHEELSNAQALLHAQQTCADAVELCELKRKYISPYVSPIQCSEPSVDGDLSPRLHAIKLGGGKKAKRRLFERLEQRDSGYGYSQVETTETQVEEEHGEPEGIEGGSGRAATVETEAVEVLEESSDVIQQLSPRTQVVELFKCKDLNAKLCGKFKELFGVGFHDLVRQFKSDKSTCTDWVYAVFGVNPTIAEGFHTLLKGQALYLHTQWTTCRWGMVLLALCRYKVAKNRETVVRQLAKMLNVPDNQLMVQPPKLQSSAAALFWFRSGMGNGSEVSGTTPEWIAKQTMLEHSFAEAQFSLTQMVQWAYDNGHTDECEIAYYYAQIADIDANAAAFLKSNNQAKYVRDCAAMCKHYRLAEMRRMSMADWIKHRGEKCDEGDWKPIVKLLRYQHIDIIVFLAALKKWLHGIPKKNCICIVGPPDTGKSCFGMSLMHFLQGTIISFVNSCSHFWLQSLVDAKVAMLDDVTSACWAYMDTHMRNLLDGNPTSIDRKHKSLAVIKCPPLLLTSNINIKHDCKYQYLQSRVTVFEFPNPFPFDSNGNAVYELSDANWNSFFKRLASSLELQTTEDEDGETSQAPRFVPGTVVRTL.

The Nuclear localization signal motif lies at Lys-86–Lys-88. 3 positions are modified to phosphoserine; by host: Ser-91, Ser-95, and Ser-109. The Nuclear export signal motif lies at Leu-108–Leu-117. The tract at residues Tyr-138–Arg-166 is disordered. Positions Gln-149–Gly-159 are enriched in acidic residues. Positions Gln-186–Glu-352 are DNA-binding region. The SF3 helicase domain occupies Ile-450 to Val-600. ATP is bound at residue Gly-476–Ser-483. A Glycyl lysine isopeptide (Lys-Gly) (interchain with G-Cter in SUMO) cross-link involves residue Lys-557.

The protein belongs to the papillomaviridae E1 protein family. As to quaternary structure, can form hexamers. Interacts with E2 protein; this interaction increases E1 DNA binding specificity. Interacts with host DNA polymerase subunit POLA2. Interacts with host single stranded DNA-binding protein RPA1. Interacts with host TOP1; this interaction stimulates the enzymatic activity of TOP1. Post-translationally, phosphorylated. In terms of processing, sumoylated.

It localises to the host nucleus. The enzyme catalyses Couples ATP hydrolysis with the unwinding of duplex DNA by translocating in the 3'-5' direction.. It catalyses the reaction ATP + H2O = ADP + phosphate + H(+). Its function is as follows. ATP-dependent DNA 3'-5' helicase required for initiation of viral DNA replication. It forms a complex with the viral E2 protein. The E1-E2 complex binds to the replication origin which contains binding sites for both proteins. During the initial step, a dimer of E1 interacts with a dimer of protein E2 leading to a complex that binds the viral origin of replication with high specificity. Then, a second dimer of E1 displaces the E2 dimer in an ATP-dependent manner to form the E1 tetramer. Following this, two E1 monomers are added to each half of the site, which results in the formation of two E1 trimers on the viral ori. Subsequently, two hexamers will be created. The double hexamer acts as a bi-directional helicase machinery and unwinds the viral DNA and then recruits the host DNA polymerase to start replication. In Homo sapiens (Human), this protein is Replication protein E1.